The primary structure comprises 119 residues: Protein TusC (119 aa).

This sequence belongs to the DsrF/TusC family. Heterohexamer, formed by a dimer of trimers. The hexameric TusBCD complex contains 2 copies each of TusB, TusC and TusD. The TusBCD complex interacts with TusE.

The protein resides in the cytoplasm. Functionally, part of a sulfur-relay system required for 2-thiolation of 5-methylaminomethyl-2-thiouridine (mnm(5)s(2)U) at tRNA wobble positions. The chain is Protein TusC from Escherichia coli O8 (strain IAI1).